We begin with the raw amino-acid sequence, 34 residues long: MSDIN-like toxin proprotein 3 (34 aa).

The propeptide occupies 1–10 (MSDINVIRAP). The segment at residues 11-18 (LLILSILP) is a cross-link (cyclopeptide (Leu-Pro)). The propeptide occupies 19-34 (CVGDDIEVLRRGEGLS).

Belongs to the MSDIN fungal toxin family. Processed by the macrocyclase-peptidase enzyme POPB to yield a toxic cyclic octapeptide. POPB first removes 10 residues from the N-terminus. Conformational trapping of the remaining peptide forces the enzyme to release this intermediate rather than proceed to macrocyclization. The enzyme rebinds the remaining peptide in a different conformation and catalyzes macrocyclization of the N-terminal 8 residues. As to expression, expressed in basidiocarps.

Probable toxin that belongs to the MSDIN-like toxin family responsible for a large number of food poisoning cases and deaths. This is MSDIN-like toxin proprotein 3 from Amanita exitialis (Guangzhou destroying angel).